The chain runs to 361 residues: DNA replication and repair protein RecF (361 aa).

An ATP-binding site is contributed by 30-37; the sequence is GPNGSGKT.

Belongs to the RecF family.

It is found in the cytoplasm. The RecF protein is involved in DNA metabolism; it is required for DNA replication and normal SOS inducibility. RecF binds preferentially to single-stranded, linear DNA. It also seems to bind ATP. This chain is DNA replication and repair protein RecF, found in Yersinia pseudotuberculosis serotype IB (strain PB1/+).